A 331-amino-acid chain; its full sequence is MAKLNQVTLSKIGKNGDQTLTLTPRGVNPTNGVASLSEAGAVPALEKRVTVSVAQPSRNRKNFKVQIKLQNPTACTRDACDPSVTRSAFADVTLSFTSYSTDEERALIRTELAALLADPLIVDAIDNLNPAYWAALLVASSGGGDNPSDPDVPVVPDVKPPDGTGRYKCPFACYRLGSIYEVGKEGSPDIYERGDEVSVTFDYALEDFLGNTNWRNWDQRLSDYDIANRRRCRGNGYIDLDATAMQSDDFVLSGRYGVRKVKFPGAFGSIKYLLNIQGDAWLDLSEVTAYRSYGMVIGFWTDSKSPQLPTDFTQFNSANCPVQTVIIIPSL.

Its subcellular location is the virion. Functionally, minor capsid protein. In Escherichia coli (Bacteriophage SP), this protein is Minor capsid protein A1.